A 1135-amino-acid polypeptide reads, in one-letter code: MSSPLNNRGTCSRSSSARSRHSARVVAQTPVDAQLHAEFESSQRNFDYSSSVSAAIRPSVSTSTVSTYHQTMQRGLYIQPFGCLLAVHPDTFTLLAYSENAPEMLDLTPHAVPTIDQRDALAVGADVRTLFRSQSSVALHKAATFGEVNLLNPILVHARTSGKPFYAILHRIDVGLVIDLEPVNPVDVPVTAAGALKSYKLAAKAISRLQSLPSGNLSLLCDVLVREVSELTGYDRVMAYKFHEDEHGEVISECRRSDLEPYLGLHYPATDIPQASRFLFMKNKVRMICDCSATLVKIIQDDSLAQPLSLCGSTLRASHGCHAQYMANMGSVASLVMSVTISNDEEEDVDTGSDQQPKGRKLWGLVVCHHTSPRFVPFPLRYACEFLLQVFGIQLNKEVELAAQAKERHILRTQTLLWDMLLRDAPVGIFTQSPNVMDLVKCDGVALYYQNQLLLLGSTPSESEIKSIATWLQENHDGSTGLSTDSLVEAGYPGAAALREVVCGMAAIKISSKDFIFWFRSHTTKEIKWGGAKHEPVDADDNGRKMHPRSSFKAFLEVVKWRSVPWEDVEMDAIHSLQLILRGSLQDEDANRNNVRSIVKAPPDDTKKIQGLLELRTVTNEMVRLIETATAPVLAVDIAGNINGWNNKAAELTGLPVMEAIGRPLIDLVVVDSIEVVKRILDSALQGIEEQNLEIKLKAFHEQECNGPIILMVNSCCSRDLSEKVIGVCFVGQDLTTQKMIMDKYTRIQGDYVAIVKNPSELIPPIFMINDLGSCLEWNKAMQKITGIQREDVIDKLLIGEVFTLHDYGCRVKDHATLTKLSILMNAVISGQDPEKLLFGFFDTDGKYIESLLTVNKRINAEGKITGAICFLHVASPELQHALQVQKMSEQAATNSFKELTYIHQELRNPLNGMQFTCNLLEPSELTEEQRKLLSSNILCQDQLKKILHDTDLESIEQCYMEMNTVEFNLEEALNTVLMQGIPLGKEKRISIERDWPVEISRMYLYGDNLRLQQVLADYLACALQFTQPAEGPIVLQVIPKKENIGSGMQIAHLEFRIVHPAPGVPEALIQEMFRHNPEVSREGLGLYICQKLVKTMSGTVQYLREADTSSFIILIEFPVAQLSSKRSKPSTSKF.

The span at 1–11 (MSSPLNNRGTC) shows a compositional bias: polar residues. Residues 1–26 (MSSPLNNRGTCSRSSSARSRHSARVV) form a disordered region. In terms of domain architecture, GAF spans 216–399 (NLSLLCDVLV…VFGIQLNKEV (184 aa)). Cys-321 lines the phytochromobilin pocket. 2 consecutive PAS domains span residues 618 to 688 (VTNE…LQGI) and 748 to 822 (IQGD…TKLS). The Histidine kinase domain occupies 902–1122 (YIHQELRNPL…IILIEFPVAQ (221 aa)).

It belongs to the phytochrome family. Homodimer. Contains one covalently linked phytochromobilin chromophore.

In terms of biological role, regulatory photoreceptor which exists in two forms that are reversibly interconvertible by light: the Pr form that absorbs maximally in the red region of the spectrum and the Pfr form that absorbs maximally in the far-red region. Photoconversion of Pr to Pfr induces an array of morphogenic responses, whereas reconversion of Pfr to Pr cancels the induction of those responses. Pfr controls the expression of a number of nuclear genes including those encoding the small subunit of ribulose-bisphosphate carboxylase, chlorophyll A/B binding protein, protochlorophyllide reductase, rRNA, etc. It also controls the expression of its own gene(s) in a negative feedback fashion. This Sorghum bicolor (Sorghum) protein is Phytochrome C (PHYC).